The following is a 469-amino-acid chain: Argininosuccinate lyase (469 aa).

This sequence belongs to the lyase 1 family. Argininosuccinate lyase subfamily.

The protein resides in the cytoplasm. The catalysed reaction is 2-(N(omega)-L-arginino)succinate = fumarate + L-arginine. Its pathway is amino-acid biosynthesis; L-arginine biosynthesis; L-arginine from L-ornithine and carbamoyl phosphate: step 3/3. The protein is Argininosuccinate lyase of Polaromonas naphthalenivorans (strain CJ2).